The chain runs to 406 residues: DNA primase DnaG (406 aa).

Residues 169–247 (PNLIIVEGRA…KIDFVARAPI (79 aa)) form the Toprim domain. Mg(2+) contacts are provided by Glu175, Asp220, and Asp222.

It belongs to the archaeal DnaG primase family. As to quaternary structure, forms a ternary complex with MCM helicase and DNA. Component of the archaeal exosome complex. Interacts with Csl4 but not with Rrp4. It depends on Mg(2+) as a cofactor.

The enzyme catalyses ssDNA + n NTP = ssDNA/pppN(pN)n-1 hybrid + (n-1) diphosphate.. Its function is as follows. RNA polymerase that catalyzes the synthesis of short RNA molecules used as primers for DNA polymerase during DNA replication. Can use NTPs but not dNTPs. Binds DNA. Also part of the exosome, which is a complex involved in RNA degradation. Acts as a poly(A)-binding protein that enhances the interaction between heteromeric, adenine-rich transcripts and the exosome. The sequence is that of DNA primase DnaG from Saccharolobus solfataricus (strain ATCC 35092 / DSM 1617 / JCM 11322 / P2) (Sulfolobus solfataricus).